Here is a 295-residue protein sequence, read N- to C-terminus: Zinc finger C2H2 protein ECU08_0560 (295 aa).

2 C2H2-type zinc fingers span residues 219 to 243 (FVCT…NLMH) and 249 to 273 (HKCR…YKVH).

The sequence is that of Zinc finger C2H2 protein ECU08_0560 from Encephalitozoon cuniculi (strain GB-M1) (Microsporidian parasite).